The chain runs to 275 residues: Putative phosphoenolpyruvate synthase regulatory protein (275 aa).

157 to 164 contributes to the ADP binding site; the sequence is GVSRCGKT.

It belongs to the pyruvate, phosphate/water dikinase regulatory protein family. PSRP subfamily.

The catalysed reaction is [pyruvate, water dikinase] + ADP = [pyruvate, water dikinase]-phosphate + AMP + H(+). The enzyme catalyses [pyruvate, water dikinase]-phosphate + phosphate + H(+) = [pyruvate, water dikinase] + diphosphate. In terms of biological role, bifunctional serine/threonine kinase and phosphorylase involved in the regulation of the phosphoenolpyruvate synthase (PEPS) by catalyzing its phosphorylation/dephosphorylation. The chain is Putative phosphoenolpyruvate synthase regulatory protein from Bordetella pertussis (strain Tohama I / ATCC BAA-589 / NCTC 13251).